Reading from the N-terminus, the 361-residue chain is Teichoic acids export ATP-binding protein TagH (361 aa).

An ABC transporter domain is found at 13-246 (TKEYDLYKSQ…YREFTKWFKG (234 aa)). Residue 60-67 (GVNGSGKS) coordinates ATP. Residues 247–361 (QSKKEKKHFQ…HDTNATSGVK (115 aa)) form a unknown region.

This sequence belongs to the ABC transporter superfamily. Teichoic acids exporter (TC 3.A.1.104.1) family. In terms of assembly, the complex is composed of two ATP-binding proteins (TagH) and two transmembrane proteins (TagG).

The protein localises to the cell membrane. The catalysed reaction is ATP + H2O + teichoic acidSide 1 = ADP + phosphate + teichoic acidSide 2.. Part of the ABC transporter complex TagGH involved in teichoic acids export. Responsible for energy coupling to the transport system. This chain is Teichoic acids export ATP-binding protein TagH, found in Levilactobacillus brevis (strain ATCC 367 / BCRC 12310 / CIP 105137 / JCM 1170 / LMG 11437 / NCIMB 947 / NCTC 947) (Lactobacillus brevis).